A 120-amino-acid polypeptide reads, in one-letter code: Large ribosomal subunit protein bL12 (120 aa).

The protein belongs to the bacterial ribosomal protein bL12 family. In terms of assembly, homodimer. Part of the ribosomal stalk of the 50S ribosomal subunit. Forms a multimeric L10(L12)X complex, where L10 forms an elongated spine to which 2 to 4 L12 dimers bind in a sequential fashion. Binds GTP-bound translation factors.

Its function is as follows. Forms part of the ribosomal stalk which helps the ribosome interact with GTP-bound translation factors. Is thus essential for accurate translation. The chain is Large ribosomal subunit protein bL12 from Aeromonas salmonicida (strain A449).